The chain runs to 336 residues: Pyridoxal 5'-phosphate synthase subunit PdxS (336 aa).

Asp30 serves as a coordination point for D-ribose 5-phosphate. The active-site Schiff-base intermediate with D-ribose 5-phosphate is the Lys87. Gly159 contributes to the D-ribose 5-phosphate binding site. Arg171 contributes to the D-glyceraldehyde 3-phosphate binding site. D-ribose 5-phosphate contacts are provided by residues Gly257 and 278–279; that span reads GS.

The protein belongs to the PdxS/SNZ family. In terms of assembly, in the presence of PdxT, forms a dodecamer of heterodimers.

The catalysed reaction is aldehydo-D-ribose 5-phosphate + D-glyceraldehyde 3-phosphate + L-glutamine = pyridoxal 5'-phosphate + L-glutamate + phosphate + 3 H2O + H(+). It participates in cofactor biosynthesis; pyridoxal 5'-phosphate biosynthesis. Catalyzes the formation of pyridoxal 5'-phosphate from ribose 5-phosphate (RBP), glyceraldehyde 3-phosphate (G3P) and ammonia. The ammonia is provided by the PdxT subunit. Can also use ribulose 5-phosphate and dihydroxyacetone phosphate as substrates, resulting from enzyme-catalyzed isomerization of RBP and G3P, respectively. The chain is Pyridoxal 5'-phosphate synthase subunit PdxS from Thermoplasma volcanium (strain ATCC 51530 / DSM 4299 / JCM 9571 / NBRC 15438 / GSS1).